We begin with the raw amino-acid sequence, 374 residues long: Eukaryotic translation initiation factor 3 subunit M (374 aa).

An N-acetylserine modification is found at Ser-2. Phosphoserine occurs at positions 2 and 152. The region spanning 180–339 (AASKVMVELL…RKVVVSHSTH (160 aa)) is the PCI domain. Lys-254 bears the N6-acetyllysine mark. Ser-367 is subject to Phosphoserine.

Belongs to the eIF-3 subunit M family. Component of the eukaryotic translation initiation factor 3 (eIF-3) complex, which is composed of 13 subunits: EIF3A, EIF3B, EIF3C, EIF3D, EIF3E, EIF3F, EIF3G, EIF3H, EIF3I, EIF3J, EIF3K, EIF3L and EIF3M. The eIF-3 complex appears to include 3 stable modules: module A is composed of EIF3A, EIF3B, EIF3G and EIF3I; module B is composed of EIF3F, EIF3H, and EIF3M; and module C is composed of EIF3C, EIF3D, EIF3E, EIF3K and EIF3L. EIF3C of module C binds EIF3B of module A and EIF3H of module B, thereby linking the three modules. EIF3J is a labile subunit that binds to the eIF-3 complex via EIF3B. The eIF-3 complex interacts with RPS6KB1 under conditions of nutrient depletion. Mitogenic stimulation leads to binding and activation of a complex composed of MTOR and RPTOR, leading to phosphorylation and release of RPS6KB1 and binding of EIF4B to eIF-3.

It localises to the cytoplasm. In terms of biological role, component of the eukaryotic translation initiation factor 3 (eIF-3) complex, which is required for several steps in the initiation of protein synthesis. The eIF-3 complex associates with the 40S ribosome and facilitates the recruitment of eIF-1, eIF-1A, eIF-2:GTP:methionyl-tRNAi and eIF-5 to form the 43S pre-initiation complex (43S PIC). The eIF-3 complex stimulates mRNA recruitment to the 43S PIC and scanning of the mRNA for AUG recognition. The eIF-3 complex is also required for disassembly and recycling of post-termination ribosomal complexes and subsequently prevents premature joining of the 40S and 60S ribosomal subunits prior to initiation. The eIF-3 complex specifically targets and initiates translation of a subset of mRNAs involved in cell proliferation, including cell cycling, differentiation and apoptosis, and uses different modes of RNA stem-loop binding to exert either translational activation or repression. In Pongo abelii (Sumatran orangutan), this protein is Eukaryotic translation initiation factor 3 subunit M.